A 144-amino-acid polypeptide reads, in one-letter code: Large ribosomal subunit protein uL11 (144 aa).

This sequence belongs to the universal ribosomal protein uL11 family. Part of the ribosomal stalk of the 50S ribosomal subunit. Interacts with L10 and the large rRNA to form the base of the stalk. L10 forms an elongated spine to which L12 dimers bind in a sequential fashion forming a multimeric L10(L12)X complex. In terms of processing, one or more lysine residues are methylated.

Functionally, forms part of the ribosomal stalk which helps the ribosome interact with GTP-bound translation factors. The polypeptide is Large ribosomal subunit protein uL11 (Neisseria meningitidis serogroup A / serotype 4A (strain DSM 15465 / Z2491)).